We begin with the raw amino-acid sequence, 202 residues long: Small ribosomal subunit protein uS5 (202 aa).

One can recognise an S5 DRBM domain in the interval 50–113 (LKQELLNLNL…REAKLNITPV (64 aa)).

Belongs to the universal ribosomal protein uS5 family. In terms of assembly, part of the 30S ribosomal subunit. Contacts protein S4.

In terms of biological role, with S4 and S12 plays an important role in translational accuracy. The polypeptide is Small ribosomal subunit protein uS5 (Pyrobaculum calidifontis (strain DSM 21063 / JCM 11548 / VA1)).